Reading from the N-terminus, the 550-residue chain is Arginine--tRNA ligase (550 aa).

The 'HIGH' region motif lies at 130 to 140; sequence ANPTGPIHIGG.

Belongs to the class-I aminoacyl-tRNA synthetase family. As to quaternary structure, monomer.

The protein localises to the cytoplasm. The enzyme catalyses tRNA(Arg) + L-arginine + ATP = L-arginyl-tRNA(Arg) + AMP + diphosphate. The polypeptide is Arginine--tRNA ligase (argS) (Mycobacterium tuberculosis (strain CDC 1551 / Oshkosh)).